We begin with the raw amino-acid sequence, 64 residues long: Large ribosomal subunit protein bL33 (64 aa).

This sequence belongs to the bacterial ribosomal protein bL33 family.

The chain is Large ribosomal subunit protein bL33 from Synechococcus elongatus (strain ATCC 33912 / PCC 7942 / FACHB-805) (Anacystis nidulans R2).